A 673-amino-acid polypeptide reads, in one-letter code: Probable serine/threonine-protein kinase SCO3848 (673 aa).

The Protein kinase domain occupies 11 to 277; that stretch reads YELGPVLGRG…EMRVDIEACL (267 aa). Residues 17 to 25 and Lys-40 contribute to the ATP site; that span reads LGRGGMAEV. Asp-138 serves as the catalytic Proton acceptor. The interval 302–345 is disordered; it reads DQPTTALRSDGGGGATTMLPPMNPDDGGYGYDERPDRRRQQPRK. PASTA domains lie at 379-445, 446-511, 512-580, and 581-649; these read GNDK…VVST, GAPK…EVAK, AEEK…VVGK, and AVEK…MTVP. The interval 472-500 is disordered; the sequence is FEVETKQTESSQDEGTILSQNPDPGKELE. Residues 479–493 are compositionally biased toward polar residues; sequence TESSQDEGTILSQNP. Disordered regions lie at residues 613 to 641 and 653 to 673; these read AQGS…PAAT and GNGN…GFGD.

Belongs to the protein kinase superfamily. Ser/Thr protein kinase family.

It carries out the reaction L-seryl-[protein] + ATP = O-phospho-L-seryl-[protein] + ADP + H(+). The catalysed reaction is L-threonyl-[protein] + ATP = O-phospho-L-threonyl-[protein] + ADP + H(+). This Streptomyces coelicolor (strain ATCC BAA-471 / A3(2) / M145) protein is Probable serine/threonine-protein kinase SCO3848.